Here is a 563-residue protein sequence, read N- to C-terminus: Arginine--tRNA ligase (563 aa).

Residues 123–133 carry the 'HIGH' region motif; it reads PNIAKDMHVGH.

It belongs to the class-I aminoacyl-tRNA synthetase family. Monomer.

It localises to the cytoplasm. The catalysed reaction is tRNA(Arg) + L-arginine + ATP = L-arginyl-tRNA(Arg) + AMP + diphosphate. The polypeptide is Arginine--tRNA ligase (argS) (Chlamydia trachomatis serovar D (strain ATCC VR-885 / DSM 19411 / UW-3/Cx)).